We begin with the raw amino-acid sequence, 358 residues long: UDP-N-acetylglucosamine--N-acetylmuramyl-(pentapeptide) pyrophosphoryl-undecaprenol N-acetylglucosamine transferase (358 aa).

Residues S196 and Q287 each contribute to the UDP-N-acetyl-alpha-D-glucosamine site.

It belongs to the glycosyltransferase 28 family. MurG subfamily.

It is found in the cell membrane. It carries out the reaction Mur2Ac(oyl-L-Ala-gamma-D-Glu-L-Lys-D-Ala-D-Ala)-di-trans,octa-cis-undecaprenyl diphosphate + UDP-N-acetyl-alpha-D-glucosamine = beta-D-GlcNAc-(1-&gt;4)-Mur2Ac(oyl-L-Ala-gamma-D-Glu-L-Lys-D-Ala-D-Ala)-di-trans,octa-cis-undecaprenyl diphosphate + UDP + H(+). The protein operates within cell wall biogenesis; peptidoglycan biosynthesis. Its function is as follows. Cell wall formation. Catalyzes the transfer of a GlcNAc subunit on undecaprenyl-pyrophosphoryl-MurNAc-pentapeptide (lipid intermediate I) to form undecaprenyl-pyrophosphoryl-MurNAc-(pentapeptide)GlcNAc (lipid intermediate II). This Streptococcus uberis (strain ATCC BAA-854 / 0140J) protein is UDP-N-acetylglucosamine--N-acetylmuramyl-(pentapeptide) pyrophosphoryl-undecaprenol N-acetylglucosamine transferase.